We begin with the raw amino-acid sequence, 456 residues long: Phosphomethylpyrimidine synthase (456 aa).

Substrate is bound by residues Asn80, Met109, Tyr139, His175, 195 to 197, 236 to 239, and Glu275; these read SRG and DSLR. A Zn(2+)-binding site is contributed by His279. Tyr302 is a binding site for substrate. His343 contacts Zn(2+). Residues Cys423, Cys426, and Cys431 each coordinate [4Fe-4S] cluster.

It belongs to the ThiC family. The cofactor is [4Fe-4S] cluster.

The enzyme catalyses 5-amino-1-(5-phospho-beta-D-ribosyl)imidazole + S-adenosyl-L-methionine = 4-amino-2-methyl-5-(phosphooxymethyl)pyrimidine + CO + 5'-deoxyadenosine + formate + L-methionine + 3 H(+). Its pathway is cofactor biosynthesis; thiamine diphosphate biosynthesis. In terms of biological role, catalyzes the synthesis of the hydroxymethylpyrimidine phosphate (HMP-P) moiety of thiamine from aminoimidazole ribotide (AIR) in a radical S-adenosyl-L-methionine (SAM)-dependent reaction. In Prochlorococcus marinus (strain MIT 9215), this protein is Phosphomethylpyrimidine synthase.